The following is a 2295-amino-acid chain: Protein DOP1B (2295 aa).

Phosphoserine occurs at positions 556 and 597. Disordered regions lie at residues 574–599 (AGDE…SSPE), 651–684 (GEEN…DPKP), 1034–1059 (CKEA…QFTT), and 1092–1136 (DLPD…LQDL). The span at 1111–1131 (ADTSSGHTDSENTSTFSSPSH) shows a compositional bias: polar residues. Serine 1167 carries the post-translational modification Phosphoserine.

It belongs to the DOP1 family. As to quaternary structure, homooligomer. Heterotrimer with ATP9A and MON2; this interaction is retromer-independent. Interacts with SNX3. As to expression, expressed in liver, heart and brain.

It is found in the early endosome membrane. Its subcellular location is the golgi apparatus membrane. Functionally, may play a role in regulating membrane trafficking of cargo proteins. Together with ATP9A and MON2, regulates SNX3 retromer-mediated endosomal sorting of WLS away from lysosomal degradation. In Mus musculus (Mouse), this protein is Protein DOP1B (Dop1b).